A 440-amino-acid polypeptide reads, in one-letter code: Trigger factor (440 aa).

The PPIase FKBP-type domain maps to Gly-163 to Pro-248.

It belongs to the FKBP-type PPIase family. Tig subfamily.

Its subcellular location is the cytoplasm. It catalyses the reaction [protein]-peptidylproline (omega=180) = [protein]-peptidylproline (omega=0). Functionally, involved in protein export. Acts as a chaperone by maintaining the newly synthesized protein in an open conformation. Functions as a peptidyl-prolyl cis-trans isomerase. This Verminephrobacter eiseniae (strain EF01-2) protein is Trigger factor.